Here is a 463-residue protein sequence, read N- to C-terminus: MTHDTRSLYSQLSSIDSLLHQADIQTLVDGYGQTFIVEHLRKLQEEARIIIRQNNQLPQWHDNWAEELKNRIALQRKAAIKPVFNLTGTVLHTNLGRALMAESAIEAVSQVMRSPATLEYSLDGASRGHRDRAIADLLCELTGAEDACIVNNNAAAVLLMLATVAPDKEVVVSRGELVEIGGAFRIPDVMCQAGCRLKEVGTTNRTHLKDYRNAINENTGLLMKVHTSNYSIQGFTAEVEGTQLAALGKEMNLPTAIDLGSGSMTNLAALGLPSEPMPQDYLQQGIDLVTFSGDKLLGGPQAGIILGKKAWIEAIQHHPLKRALRVDKMTLAALDATLRLYQQPEKMIKDIPTLRLLTRTQTEIHDMAQRLLPHFQAYYGDNYHITISSCASQIGSGSLPIESLPSAALTFAAKDGKGSQLDALAAHWRNLEKPIIGRITDGRLWLDLRCLEDENALIQALSL.

The residue at position 295 (Lys-295) is an N6-(pyridoxal phosphate)lysine.

This sequence belongs to the SelA family. In terms of assembly, homodecamer; pentamer of dimers. Binds only one seryl-tRNA(Sec) per dimer. Requires pyridoxal 5'-phosphate as cofactor.

Its subcellular location is the cytoplasm. The enzyme catalyses L-seryl-tRNA(Sec) + selenophosphate + H(+) = L-selenocysteinyl-tRNA(Sec) + phosphate. It participates in aminoacyl-tRNA biosynthesis; selenocysteinyl-tRNA(Sec) biosynthesis; selenocysteinyl-tRNA(Sec) from L-seryl-tRNA(Sec) (bacterial route): step 1/1. In terms of biological role, converts seryl-tRNA(Sec) to selenocysteinyl-tRNA(Sec) required for selenoprotein biosynthesis. The sequence is that of L-seryl-tRNA(Sec) selenium transferase from Proteus mirabilis (strain HI4320).